Here is a 493-residue protein sequence, read N- to C-terminus: Cytochrome P450 2E1 (493 aa).

Phe-298–Thr-303 is a substrate binding site. Cys-437 lines the heme pocket.

It belongs to the cytochrome P450 family. In terms of assembly, interacts with chaperones HSP70 and HSP90; this interaction is required for initial targeting to mitochondria. Requires heme as cofactor.

The protein localises to the endoplasmic reticulum membrane. It localises to the microsome membrane. The protein resides in the mitochondrion inner membrane. It carries out the reaction an organic molecule + reduced [NADPH--hemoprotein reductase] + O2 = an alcohol + oxidized [NADPH--hemoprotein reductase] + H2O + H(+). The enzyme catalyses (5Z,8Z,11Z)-eicosatrienoate + reduced [NADPH--hemoprotein reductase] + O2 = 19-hydroxy-(5Z,8Z,11Z)-eicosatrienoate + oxidized [NADPH--hemoprotein reductase] + H2O + H(+). The catalysed reaction is (5Z,8Z,11Z,14Z,17Z)-eicosapentaenoate + reduced [NADPH--hemoprotein reductase] + O2 = 19-hydroxy-(5Z,8Z,11Z,14Z,17Z)-eicosapentaenoate + oxidized [NADPH--hemoprotein reductase] + H2O + H(+). It catalyses the reaction (4Z,7Z,10Z,13Z,16Z,19Z)-docosahexaenoate + reduced [NADPH--hemoprotein reductase] + O2 = 21-hydroxy-(4Z,7Z,10Z,13Z,16Z,19Z)-docosahexaenoate + oxidized [NADPH--hemoprotein reductase] + H2O + H(+). It carries out the reaction dodecanoate + reduced [NADPH--hemoprotein reductase] + O2 = 11-hydroxydodecanoate + oxidized [NADPH--hemoprotein reductase] + H2O + H(+). The enzyme catalyses tetradecanoate + reduced [NADPH--hemoprotein reductase] + O2 = 13-hydroxytetradecanoate + oxidized [NADPH--hemoprotein reductase] + H2O + H(+). The catalysed reaction is 4-nitrophenol + NADPH + O2 + H(+) = 4-nitrocatechol + NADP(+) + H2O. The protein operates within lipid metabolism; fatty acid metabolism. With respect to regulation, the omega-1 hydroxylase activity is stimulated by cytochrome b5. A cytochrome P450 monooxygenase involved in the metabolism of fatty acids. Mechanistically, uses molecular oxygen inserting one oxygen atom into a substrate, and reducing the second into a water molecule, with two electrons provided by NADPH via cytochrome P450 reductase (NADPH--hemoprotein reductase). Catalyzes the hydroxylation of carbon-hydrogen bonds. Hydroxylates fatty acids specifically at the omega-1 position displaying the highest catalytic activity for saturated fatty acids. May be involved in the oxidative metabolism of xenobiotics. This chain is Cytochrome P450 2E1 (CYP2E1), found in Macaca mulatta (Rhesus macaque).